The sequence spans 449 residues: Tubulin alpha-1C chain (449 aa).

The MREC motif motif lies at 1–4; sequence MREC. Position 11 (Q11) interacts with GTP. The residue at position 40 (K40) is an N6-acetyllysine. The GTP site is built by E71, S140, G144, T145, T179, N206, and N228. E71 contributes to the Mg(2+) binding site. The active site involves E254. At Y282 the chain carries 3'-nitrotyrosine. A disordered region spans residues 429 to 449; the sequence is EKDYEEVGADSADGEDEGEEY. Residues 431–449 show a composition bias toward acidic residues; it reads DYEEVGADSADGEDEGEEY. Y432 carries the phosphotyrosine modification. S439 is subject to Phosphoserine. Y449 carries the 3'-nitrotyrosine modification.

Belongs to the tubulin family. As to quaternary structure, dimer of alpha and beta chains. A typical microtubule is a hollow water-filled tube with an outer diameter of 25 nm and an inner diameter of 15 nM. Alpha-beta heterodimers associate head-to-tail to form protofilaments running lengthwise along the microtubule wall with the beta-tubulin subunit facing the microtubule plus end conferring a structural polarity. Microtubules usually have 13 protofilaments but different protofilament numbers can be found in some organisms and specialized cells. Mg(2+) serves as cofactor. In terms of processing, some glutamate residues at the C-terminus are polyglutamylated, resulting in polyglutamate chains on the gamma-carboxyl group. Polyglutamylation plays a key role in microtubule severing by spastin (SPAST). SPAST preferentially recognizes and acts on microtubules decorated with short polyglutamate tails: severing activity by SPAST increases as the number of glutamates per tubulin rises from one to eight, but decreases beyond this glutamylation threshold. Glutamylation is also involved in cilia motility. Some glutamate residues at the C-terminus are monoglycylated but not polyglycylated due to the absence of functional TTLL10 in human. Monoglycylation is mainly limited to tubulin incorporated into cilia and flagella axonemes, which is required for their stability and maintenance. Flagella glycylation controls sperm motility. Both polyglutamylation and monoglycylation can coexist on the same protein on adjacent residues, and lowering glycylation levels increases polyglutamylation, and reciprocally. Post-translationally, acetylation of alpha chains at Lys-40 is located inside the microtubule lumen. This modification has been correlated with increased microtubule stability, intracellular transport and ciliary assembly. In terms of processing, methylation of alpha chains at Lys-40 is found in mitotic microtubules and is required for normal mitosis and cytokinesis contributing to genomic stability. Nitration of Tyr-449 is irreversible and interferes with normal dynein intracellular distribution. Post-translationally, undergoes a tyrosination/detyrosination cycle, the cyclic removal and re-addition of a C-terminal tyrosine residue by the enzymes tubulin tyrosine carboxypeptidase (MATCAP1/KIAA0895L, VASH1 or VASH2) and tubulin tyrosine ligase (TTL), respectively. In terms of processing, tyrosination promotes microtubule interaction with CAP-Gly domain-containing proteins such as CLIP1, CLIP2 and DCTN1. Tyrosination regulates the initiation of dynein-dynactin motility via interaction with DCTN1, which brings the dynein-dynactin complex into contact with microtubules. In neurons, tyrosinated tubulins mediate the initiation of retrograde vesicle transport. Detyrosination is involved in metaphase plate congression by guiding chromosomes during mitosis: detyrosination promotes interaction with CENPE, promoting pole-proximal transport of chromosomes toward the equator. Detyrosination increases microtubules-dependent mechanotransduction in dystrophic cardiac and skeletal muscle. In cardiomyocytes, detyrosinated microtubules are required to resist to contractile compression during contraction: detyrosination promotes association with desmin (DES) at force-generating sarcomeres, leading to buckled microtubules and mechanical resistance to contraction.

Its subcellular location is the cytoplasm. It localises to the cytoskeleton. The enzyme catalyses GTP + H2O = GDP + phosphate + H(+). Tubulin is the major constituent of microtubules, a cylinder consisting of laterally associated linear protofilaments composed of alpha- and beta-tubulin heterodimers. Microtubules grow by the addition of GTP-tubulin dimers to the microtubule end, where a stabilizing cap forms. Below the cap, tubulin dimers are in GDP-bound state, owing to GTPase activity of alpha-tubulin. This Homo sapiens (Human) protein is Tubulin alpha-1C chain (TUBA1C).